Reading from the N-terminus, the 227-residue chain is Ferritin light chain (227 aa).

A signal peptide spans 1–19 (MKFFVALALFACLGSLALA). An intrachain disulfide couples C25 to C44. Residues 48-208 (FAGIDHIEPE…GYANDLAKLM (161 aa)) form the Ferritin-like diiron domain.

The protein belongs to the ferritin family. As to quaternary structure, oligomer of 12 light (L) chains and 12 heavy (H) chains; L and H chains are disulfide-linked. The functional molecule forms a roughly spherical shell with a diameter of 12 nm and contains a central cavity into which the insoluble ferric iron core is deposited. Expressed in hemolymph, gut, ovaries and to a lesser extent in testes (at protein level). Expressed in the head (at protein level).

It localises to the golgi apparatus. The protein localises to the secreted. Its function is as follows. Stores iron in a soluble, non-toxic, readily available form. Important for iron homeostasis. Iron is taken up in the ferrous form and deposited as ferric hydroxides after oxidation. Ferritin is composed of a heavy (H) chain which is responsible for the oxidation and uptake of ferrous iron, and a light (L) chain which facilitates the nucleation of the ferrihydrite iron core. Required for dietary iron absorption in the midgut. Involved in tissue iron detoxification by exporting excess iron. Plays a role in the maintenance of circadian rhythms. Required for embryo and larval development. The protein is Ferritin light chain of Drosophila melanogaster (Fruit fly).